The sequence spans 548 residues: MDSQRNLLVIALLFVSFMIWQAWEQDKNPQPQAQQTTQTTTTAAGSAADQGVPASGQGKLISVKTDVLDLTINTRGGDVEQALLPAYPKELNSTQPFQLLETSPQFIYQAQSGLTGRDGPDNPANGPRPLYNVEKDAYVLAEGQNELQVPMTYTDAAGNTFTKTFVLKRGDYAVNVNYNVQNAGEKPLEISSFGQLKQSITLPPHLDTGSSNFALHTFRGAAYSTPDEKYEKYKFDTIADNENLNISSKGGWVAMLQQYFATAWIPHNDGTNNFYTANLGNGIAAIGYKSQPVLVQPGQTGAMNSTLWVGPEIQDKMAAVAPHLDLTVDYGWLWFISQPLFKLLKWIHSFVGNWGFSIIIITFIVRGIMYPLTKAQYTSMAKMRMLQPKIQAMRERLGDDKQRISQEMMALYKAEKVNPLGGCFPLLIQMPIFLALYYMLMGSVELRQAPFALWIHDLSAQDPYYILPILMGVTMFFIQKMSPTTVTDPMQQKIMTFMPVIFTVFFLWFPSGLVLYYIVSNLVTIIQQQLIYRGLEKRGLHSREKKKS.

A helical transmembrane segment spans residues 6-26; it reads NLLVIALLFVSFMIWQAWEQD. The tract at residues 28-55 is disordered; it reads NPQPQAQQTTQTTTTAAGSAADQGVPAS. A compositionally biased stretch (low complexity) spans 30–50; that stretch reads QPQAQQTTQTTTTAAGSAADQ. Transmembrane regions (helical) follow at residues 350–370, 420–440, 458–478, and 499–519; these read FVGNWGFSIIIITFIVRGIMY, LGGCFPLLIQMPIFLALYYML, LSAQDPYYILPILMGVTMFFI, and PVIFTVFFLWFPSGLVLYYIV.

The protein belongs to the OXA1/ALB3/YidC family. Type 1 subfamily. As to quaternary structure, interacts with the Sec translocase complex via SecD. Specifically interacts with transmembrane segments of nascent integral membrane proteins during membrane integration.

The protein resides in the cell inner membrane. In terms of biological role, required for the insertion and/or proper folding and/or complex formation of integral membrane proteins into the membrane. Involved in integration of membrane proteins that insert both dependently and independently of the Sec translocase complex, as well as at least some lipoproteins. Aids folding of multispanning membrane proteins. The sequence is that of Membrane protein insertase YidC from Escherichia coli (strain K12 / MC4100 / BW2952).